Here is a 33-residue protein sequence, read N- to C-terminus: Rugosin-B (33 aa).

Cysteines 27 and 33 form a disulfide.

Belongs to the frog skin active peptide (FSAP) family. Brevinin subfamily. In terms of tissue distribution, expressed by the skin glands.

It is found in the secreted. Its function is as follows. Shows antibacterial activity against both Gram-negative and Gram-positive bacteria. The protein is Rugosin-B of Glandirana rugosa (Japanese wrinkled frog).